Consider the following 134-residue polypeptide: Ribosome-binding factor A (134 aa).

Residues 115 to 134 are disordered; it reads EDQRQERGEIPPGSDELQPD.

The protein belongs to the RbfA family. In terms of assembly, monomer. Binds 30S ribosomal subunits, but not 50S ribosomal subunits or 70S ribosomes.

It is found in the cytoplasm. Its function is as follows. One of several proteins that assist in the late maturation steps of the functional core of the 30S ribosomal subunit. Associates with free 30S ribosomal subunits (but not with 30S subunits that are part of 70S ribosomes or polysomes). Required for efficient processing of 16S rRNA. May interact with the 5'-terminal helix region of 16S rRNA. This chain is Ribosome-binding factor A, found in Synechococcus sp. (strain CC9902).